The primary structure comprises 449 residues: Chitobiosyldiphosphodolichol beta-mannosyltransferase (449 aa).

Residues 1 to 7 lie on the Lumenal side of the membrane; that stretch reads MFLEIPR. A helical transmembrane segment spans residues 8–28; sequence WLLALIILYLSIPLVVYYVIP. The Dolichol recognition signature appears at 21–32; that stretch reads LVVYYVIPYLFY. The Cytoplasmic segment spans residues 29–104; that stretch reads YLFYGNKSTK…SNLKRKGGGT (76 aa). An intramembrane region (helical) is located at residues 105-125; that stretch reads SVIFMVKKVLFQVLSIFKLLW. Topologically, residues 126-449 are cytoplasmic; it reads ELRGSDYILV…RTMRDLKLIH (324 aa). Positions 435-449 are required for oligomerization; sequence QSNWERTMRDLKLIH.

The protein belongs to the glycosyltransferase group 1 family. Glycosyltransferase 33 subfamily. Homodimer. ALG1 forms mannosyltransferases (MT) heteromeric complexes with either ALG2 or ALG11.

Its subcellular location is the endoplasmic reticulum membrane. The catalysed reaction is an N,N'-diacetylchitobiosyl-diphospho-di-trans,poly-cis-dolichol + GDP-alpha-D-mannose = a beta-D-Man-(1-&gt;4)-beta-D-GlcNAc-(1-&gt;4)-alpha-D-GlcNAc-diphospho-di-trans,poly-cis-dolichol + GDP + H(+). Its pathway is protein modification; protein glycosylation. Its function is as follows. Participates in the formation of the lipid-linked precursor oligosaccharide for N-glycosylation. Involved in assembling the dolichol-pyrophosphate-GlcNAc(2)-Man(5) intermediate on the cytoplasmic surface of the ER. The chain is Chitobiosyldiphosphodolichol beta-mannosyltransferase (ALG1) from Saccharomyces cerevisiae (strain ATCC 204508 / S288c) (Baker's yeast).